A 1975-amino-acid chain; its full sequence is MATNGVYIVMGEANCVVALLNKARRQYQLSQVPTLEDTDPLLRNFTDLKEVLNEVADLADMNPQTYLSPFLDVIKAQNTNGPITEAALAAVAKFLNYGLIDASSIKAANAVESIAYAVVHTKFIGGKSTGSDECVLFKILQVLRSLLLSPPGILLSNEAVCDMMQSCFRIVFEQNLSLLLRKAAESTLADMTQLIFTRLPTFVEDTRHPYIRQLVNPTEKRQKRKKKRQLSVHIETKAKEPENVPTEMTKLIGEAAETAETDGAANLGYDVVLTTDPPVDTVTHPDPPIEEIIKLAEPISAGDEADSESEGGGGEEHHERPPVRAHAGLQREIVSDEEEIDTEQTVGGEEKMPYGLPCCRELLRFLITMTNPVDRHNTESMVILGLNLLIVALEAIADFLPNYDILMPLIKNELCRNLLQLLDTNRLPVLAATNRCCFLLFESMRMHMKFQLESYLKKLQSIVLTEEKQHENGGGGTEQKEMALESLVQLWRIPGLVTEMYLNFDCDLYCGNIFEDLTKLLVENSFPTVGGHTASLLSLDALLVVIETIEQNCEDRENGRGEVAKEQEHKDLKKLGLPVLSGYDLAKKMAISTGGKASPMPVSSSIVLRSNRHAPSTELPSMSQIIEQKKRKRLIAEGTELFNQSPKKGIAFLREKGILGHDEQSLVQWLRTNPQLDKKAIADYICNRKHAEVLNAFVKSFPFENTRLDVALRMFLETFRLPGESAEIALVMQHFSEEWFRANNEPFFHVDAAFTLSYAIIMLNVDQHNPQAKRSQPPMTVDCFRRNLSGTNDSRDFDPEMLADMYQAIKTEEIVMPAEQKGTVKEDYMWKVLLRRGETAEGSFYHAPTGWNDHDLFAVCWGPAVAALSYVFDKSEHEQILQKALTGYRKCAKIAAYYGMKEVFDNLCIHLCKFTTLTSMRDGGAGGGADEDVDLSAAALLSHSSSPEAVALAFGENHKAQLATRTLFYLVHENGNILREGWRNLFEALLQLFRARLLPAELTEVEDYVDEKGWVNIQRVHQKELPHTRNDSGLLSWFGLGGGASEADRRKPTQEQLSSMKLASQVISECRPSQIVADSKYLTSTSLAELLSSIAANSAQIVEQAEPQQKTASLSGEDEDALVFYLELIVAITLENKDRLPLVWPHVRRHLEWLLSPRFGRCPVLVERAVVGLLRVANRNLFRDNTVSDDVLHSLSMLLRLSPKALFIFSRQIAFGLYELIRANAANVHKKEHWAVLFALLEAAGAAVLPDDYVMMTTTEKQQQSLRVGGDQQQQRMAYSDVEGASGRGGGAHEERAYTSEGEERRRGGYDSNSDLESRVDSAGSLLGAQKQPADWIHLDHKDAAKATEEALTALGANVVSSKKNFRQFGSLVLRNGLGRHEPAAFLKVCECLAFLLRDAVHVTPDNFESSLQCLRTMVEASLDGGVYAAGPLSGDAQNRLRSNVTDEKAVKKHHHHHHGHKKKELCTDVTEDADESRNEEQQLIGNYQQMSLHLLDLCSQLHSQTPAIFAKWAQGASPAASDLATVAFIWTDIWRPLLQAIGRLSCDCRRGVRAAALTHLQRAFLPANMATLGAAEWQSCFGEVLFPLLTKLLEPFSQMDPIGMEDTRVRTLQIVAKTLLNHLSALSALDSFPDLWMLLLDYMEQYLRVDSCGNLNEAVPESLKNMLLVMDSTGIFAATPRLYDVTVERLNKFMPELIKDTIPNPPRPGQQQSEASEPKKEHASGLEPPPPSSNSTAATSTSDPSIATAQSSISTASSVVGPLVTCPEDAGISAPIPIQHPLTEVIVHSGPTSPIGSPPQTEPPASSPPQHQHSEHQQYEQYRQQQAAAAQQYQQYNQNYPQQQQQQQQQYAYSPEHAAYYQQQYAHQQQQYAEHYANQYQHYQQQQQQQQQHPVNPTSPSVHGQYSVANPLPLPAHPAYHPIVAPSVNSAFTHVYTPPQNNAPALAPSAPTTTSADSPYFTPIPYNPSQQEKP.

2 disordered regions span residues 216–243 and 299–352; these read NPTE…EPEN and ISAG…EEKM. Over residues 221–230 the composition is skewed to basic residues; sequence RQKRKKKRQL. The SEC7 domain maps to 624 to 812; it reads QIIEQKKRKR…ADMYQAIKTE (189 aa). Polar residues predominate over residues 1264–1277; sequence QSLRVGGDQQQQRM. Disordered regions lie at residues 1264–1318, 1447–1473, 1699–1751, 1788–1854, and 1877–1975; these read QSLR…DLES, DEKA…VTED, IKDT…ATAQ, VHSG…QYAY, and YANQ…QEKP. Positions 1291–1309 are enriched in basic and acidic residues; that stretch reads GAHEERAYTSEGEERRRGG. Basic residues predominate over residues 1451–1464; that stretch reads VKKHHHHHHGHKKK. The span at 1734-1751 shows a compositional bias: low complexity; the sequence is SNSTAATSTSDPSIATAQ. Positions 1797–1808 are enriched in pro residues; it reads GSPPQTEPPASS. Low complexity-rich tracts occupy residues 1820–1854 and 1877–1894; these read YEQY…QYAY and YANQ…QQQH. Residues 1895–1909 are compositionally biased toward polar residues; sequence PVNPTSPSVHGQYSV. Over residues 1938–1957 the composition is skewed to low complexity; sequence TPPQNNAPALAPSAPTTTSA.

Its subcellular location is the golgi apparatus. The protein localises to the cis-Golgi network. The protein resides in the endoplasmic reticulum-Golgi intermediate compartment. Its function is as follows. Guanine-nucleotide exchange factor (GEF) for members of the Arf family of small GTPases involved in trafficking in the early secretory pathway; its GEF activity initiates the coating of nascent vesicles via the localized generation of activated ARFs through replacement of GDP with GTP. Also, plays a role in receptor-mediated endocytosis in oocytes and endosomal trafficking. Involved in vesicle retrograde transport from the ERGIC and cis-Golgi compartments to the endoplasmic reticulum (ER). Plays a role in maintaining mitochondrial morphology, network organization and function. May be required for the basolateral cell membrane localization of the serine threonine protein kinase sgk-1 in intestinal cells. This chain is Golgi-specific brefeldin A-resistance guanine nucleotide exchange factor 1 homolog, found in Caenorhabditis elegans.